Consider the following 296-residue polypeptide: Release factor glutamine methyltransferase (296 aa).

S-adenosyl-L-methionine contacts are provided by residues 133–137 (GTGSG), D156, and N201. 201 to 204 (NPPY) is a substrate binding site.

Belongs to the protein N5-glutamine methyltransferase family. PrmC subfamily.

It catalyses the reaction L-glutaminyl-[peptide chain release factor] + S-adenosyl-L-methionine = N(5)-methyl-L-glutaminyl-[peptide chain release factor] + S-adenosyl-L-homocysteine + H(+). In terms of biological role, methylates the class 1 translation termination release factors RF1/PrfA and RF2/PrfB on the glutamine residue of the universally conserved GGQ motif. The polypeptide is Release factor glutamine methyltransferase (Rhodopirellula baltica (strain DSM 10527 / NCIMB 13988 / SH1)).